A 314-amino-acid chain; its full sequence is Homoserine kinase (314 aa).

An ATP-binding site is contributed by 95–105 (PHSRGLGSSAS).

Belongs to the GHMP kinase family. Homoserine kinase subfamily.

It localises to the cytoplasm. The enzyme catalyses L-homoserine + ATP = O-phospho-L-homoserine + ADP + H(+). The protein operates within amino-acid biosynthesis; L-threonine biosynthesis; L-threonine from L-aspartate: step 4/5. In terms of biological role, catalyzes the ATP-dependent phosphorylation of L-homoserine to L-homoserine phosphate. This Rhodococcus erythropolis (strain PR4 / NBRC 100887) protein is Homoserine kinase.